A 127-amino-acid chain; its full sequence is MFRTMMRAKLHRATVTEANLNYVGSITIDEDLMDAVNIVENEKVQIVNNNNGARLETYVIKGERGSGVVCLNGAAARLVQPGDKVIIICYGLVTEEEIHTQEPKIAVLDDNNQIIEMLGAEKAGTIL.

Serine 25 acts as the Schiff-base intermediate with substrate; via pyruvic acid in catalysis. Serine 25 is modified (pyruvic acid (Ser)). Threonine 57 contributes to the substrate binding site. Residue tyrosine 58 is the Proton donor of the active site. 73-75 (GAA) is a substrate binding site.

The protein belongs to the PanD family. Heterooctamer of four alpha and four beta subunits. Requires pyruvate as cofactor. In terms of processing, is synthesized initially as an inactive proenzyme, which is activated by self-cleavage at a specific serine bond to produce a beta-subunit with a hydroxyl group at its C-terminus and an alpha-subunit with a pyruvoyl group at its N-terminus.

It localises to the cytoplasm. The enzyme catalyses L-aspartate + H(+) = beta-alanine + CO2. The protein operates within cofactor biosynthesis; (R)-pantothenate biosynthesis; beta-alanine from L-aspartate: step 1/1. Its function is as follows. Catalyzes the pyruvoyl-dependent decarboxylation of aspartate to produce beta-alanine. The polypeptide is Aspartate 1-decarboxylase (Bacillus cereus (strain B4264)).